Reading from the N-terminus, the 318-residue chain is Pantothenate kinase (318 aa).

An ATP-binding site is contributed by 96-103 (GSVSVGKS).

The protein belongs to the prokaryotic pantothenate kinase family.

It is found in the cytoplasm. It catalyses the reaction (R)-pantothenate + ATP = (R)-4'-phosphopantothenate + ADP + H(+). The protein operates within cofactor biosynthesis; coenzyme A biosynthesis; CoA from (R)-pantothenate: step 1/5. The protein is Pantothenate kinase of Bradyrhizobium sp. (strain ORS 278).